Reading from the N-terminus, the 329-residue chain is Beta-ketoacyl-[acyl-carrier-protein] synthase III (329 aa).

Residues C123 and H256 contribute to the active site. Residues 257–261 (QANIR) form an ACP-binding region. N286 is an active-site residue.

This sequence belongs to the thiolase-like superfamily. FabH family. Homodimer.

It is found in the cytoplasm. It carries out the reaction malonyl-[ACP] + acetyl-CoA + H(+) = 3-oxobutanoyl-[ACP] + CO2 + CoA. The protein operates within lipid metabolism; fatty acid biosynthesis. Catalyzes the condensation reaction of fatty acid synthesis by the addition to an acyl acceptor of two carbons from malonyl-ACP. Catalyzes the first condensation reaction which initiates fatty acid synthesis and may therefore play a role in governing the total rate of fatty acid production. Possesses both acetoacetyl-ACP synthase and acetyl transacylase activities. Its substrate specificity determines the biosynthesis of branched-chain and/or straight-chain of fatty acids. In Burkholderia lata (strain ATCC 17760 / DSM 23089 / LMG 22485 / NCIMB 9086 / R18194 / 383), this protein is Beta-ketoacyl-[acyl-carrier-protein] synthase III.